Reading from the N-terminus, the 237-residue chain is Bax inhibitor 1 (237 aa).

At M1–K29 the chain is on the cytoplasmic side. A Glycyl lysine isopeptide (Lys-Gly) (interchain with G-Cter in ubiquitin) cross-link involves residue K7. The helical transmembrane segment at V30–V50 threads the bilayer. Residues T51 to R52 are Lumenal-facing. Residues F53–A73 traverse the membrane as a helical segment. The Cytoplasmic segment spans residues T74–G86. Residues L87–I107 form a helical membrane-spanning segment. At A108–S112 the chain is on the lumenal side. A helical membrane pass occupies residues I113–L133. The Cytoplasmic segment spans residues Y134–S139. Residues Y140–G160 form a helical membrane-spanning segment. Residues N161 to S166 lie on the Lumenal side of the membrane. A helical transmembrane segment spans residues I167–F187. Over D188 to H206 the chain is Cytoplasmic. Residues C207–M227 constitute an intramembrane region (helical). Over N228–K237 the chain is Cytoplasmic.

It belongs to the BI1 family. As to quaternary structure, interacts with BCL2 and BCL2L1. Interacts with ERN1. In terms of processing, ubiquitinated by BFAR, leading to proteasomal degradation.

Its subcellular location is the endoplasmic reticulum membrane. In terms of biological role, endoplasmic reticulum (ER)-resident protein that confers cellular protection as an anti-apoptotic protein by limiting multiple stress-inducing pathways surrounding the endoplasmic reticulum and mitochondria. Inhibits the activities of the key sensor for the endoplasmic reticulum unfolded protein response IRE1alpha/ERN1 both directly and by blocking BAX/BAK binding. Modulates ER calcium homeostasis by acting as a calcium-leak channel. Negatively regulates autophagy and autophagosome formation, especially during periods of nutrient deprivation, and reduces cell survival during starvation. This Sus scrofa (Pig) protein is Bax inhibitor 1 (TMBIM6).